The primary structure comprises 465 residues: Hepatocyte nuclear factor 6 (465 aa).

Disordered regions lie at residues glycine 15 to histidine 84 and serine 119 to leucine 141. Positions proline 123–arginine 140 are enriched in basic residues. The CUT DNA-binding region spans glycine 283–alanine 369. The homeobox DNA-binding region spans proline 385–tryptophan 444. Residues aspartate 442–alanine 465 form a disordered region. The segment covering glycine 448–alanine 465 has biased composition (low complexity).

The protein belongs to the CUT homeobox family. Binds DNA as a monomer. As to expression, expressed in liver, brain, spleen and testis.

The protein localises to the nucleus. Transcriptional activator. Binds the consensus sequence 5'-DHWATTGAYTWWD-3' on a variety of gene promoters such as those of HNF3B and TTR. Important for liver genes transcription. The affinity of HNF-6-alpha and HNF-6-beta for DNA differs depending on the target sequence. In Rattus norvegicus (Rat), this protein is Hepatocyte nuclear factor 6 (Onecut1).